The following is a 508-amino-acid chain: UDP-N-acetylmuramoyl-L-alanyl-D-glutamate--2,6-diaminopimelate ligase (508 aa).

Serine 29 contributes to the UDP-N-acetyl-alpha-D-muramoyl-L-alanyl-D-glutamate binding site. 112 to 118 contributes to the ATP binding site; the sequence is GTNGKTS. UDP-N-acetyl-alpha-D-muramoyl-L-alanyl-D-glutamate is bound by residues 159–160, serine 186, glutamine 192, and arginine 194; that span reads TT. Position 226 is an N6-carboxylysine (lysine 226). Residues arginine 398, 421–424, glycine 473, and glutamate 477 contribute to the meso-2,6-diaminopimelate site; that span reads DNPR. Positions 421-424 match the Meso-diaminopimelate recognition motif motif; that stretch reads DNPR.

This sequence belongs to the MurCDEF family. MurE subfamily. Mg(2+) is required as a cofactor. Carboxylation is probably crucial for Mg(2+) binding and, consequently, for the gamma-phosphate positioning of ATP.

The protein resides in the cytoplasm. It catalyses the reaction UDP-N-acetyl-alpha-D-muramoyl-L-alanyl-D-glutamate + meso-2,6-diaminopimelate + ATP = UDP-N-acetyl-alpha-D-muramoyl-L-alanyl-gamma-D-glutamyl-meso-2,6-diaminopimelate + ADP + phosphate + H(+). The protein operates within cell wall biogenesis; peptidoglycan biosynthesis. Catalyzes the addition of meso-diaminopimelic acid to the nucleotide precursor UDP-N-acetylmuramoyl-L-alanyl-D-glutamate (UMAG) in the biosynthesis of bacterial cell-wall peptidoglycan. The sequence is that of UDP-N-acetylmuramoyl-L-alanyl-D-glutamate--2,6-diaminopimelate ligase from Janthinobacterium sp. (strain Marseille) (Minibacterium massiliensis).